Here is a 489-residue protein sequence, read N- to C-terminus: Betaine aldehyde dehydrogenase (489 aa).

K(+)-binding residues include Thr-26 and Asp-93. 150-152 (GAW) lines the NAD(+) pocket. The Charge relay system role is filled by Lys-162. NAD(+) is bound at residue 176–179 (KPSE). Val-180 contributes to the K(+) binding site. 229–232 (GVET) lines the NAD(+) pocket. Leu-245 contributes to the K(+) binding site. Residue Glu-251 is the Proton acceptor of the active site. NAD(+) is bound by residues Gly-253, Cys-285, and Glu-386. The Nucleophile role is filled by Cys-285. At Cys-285 the chain carries Cysteine sulfenic acid (-SOH). K(+)-binding residues include Lys-456 and Gly-459. The Charge relay system role is filled by Glu-463.

It belongs to the aldehyde dehydrogenase family. Dimer of dimers. Requires K(+) as cofactor.

It carries out the reaction betaine aldehyde + NAD(+) + H2O = glycine betaine + NADH + 2 H(+). It functions in the pathway amine and polyamine biosynthesis; betaine biosynthesis via choline pathway; betaine from betaine aldehyde: step 1/1. Functionally, involved in the biosynthesis of the osmoprotectant glycine betaine. Catalyzes the irreversible oxidation of betaine aldehyde to the corresponding acid. This is Betaine aldehyde dehydrogenase from Paraburkholderia phymatum (strain DSM 17167 / CIP 108236 / LMG 21445 / STM815) (Burkholderia phymatum).